We begin with the raw amino-acid sequence, 504 residues long: Arabinose import ATP-binding protein AraG (504 aa).

2 ABC transporter domains span residues 8–243 and 256–499; these read LSFR…MVGR and YGEE…MPKV. 40–47 is a binding site for ATP; the sequence is GENGAGKS.

This sequence belongs to the ABC transporter superfamily. Arabinose importer (TC 3.A.1.2.2) family. The complex is composed of two ATP-binding proteins (AraG), two transmembrane proteins (AraH) and a solute-binding protein (AraF).

The protein localises to the cell inner membrane. It catalyses the reaction L-arabinose(out) + ATP + H2O = L-arabinose(in) + ADP + phosphate + H(+). In terms of biological role, part of the ABC transporter complex AraFGH involved in arabinose import. Responsible for energy coupling to the transport system. The sequence is that of Arabinose import ATP-binding protein AraG from Shigella dysenteriae serotype 1 (strain Sd197).